The sequence spans 274 residues: Nickel/cobalt efflux system RcnA (274 aa).

The Periplasmic segment spans residues 1 to 12; it reads MGEFPTLLQQGN. The chain crosses the membrane as a helical span at residues 13–33; that stretch reads GWFFIPSAILLGILHGLEPGH. Residues 34–51 lie on the Cytoplasmic side of the membrane; sequence SKTMMAAFIIAIKGTVKQ. Residues 52 to 72 traverse the membrane as a helical segment; it reads AVMLGLAATLSHTAIVWLIAL. Over 73–85 the chain is Periplasmic; that stretch reads GGMYLSRAFTAQS. A helical transmembrane segment spans residues 86 to 106; that stretch reads VEPWLQLISAIIILSTACWMF. The Cytoplasmic segment spans residues 107–174; it reads WRTWRGEQQW…FDGQTVTNGQ (68 aa). Residues 122–141 show a composition bias toward basic and acidic residues; sequence HHDHDHDHDHDHDHHGHIHP. The tract at residues 122-143 is disordered; the sequence is HHDHDHDHDHDHDHHGHIHPEG. Residues 175-195 traverse the membrane as a helical segment; the sequence is ILLFGLTGGLIPCPAAITVLL. At 196 to 209 the chain is on the periplasmic side; it reads ICIQLKAFTLGATM. Residues 210–230 traverse the membrane as a helical segment; it reads VLSFSLSLALTLVTVGVGAAI. The Cytoplasmic portion of the chain corresponds to 231–251; that stretch reads SVQQAAKRWSGFSTLARRAPY. The chain crosses the membrane as a helical span at residues 252–272; sequence FSSILIGLVGVYMGIHGYTGI. The Periplasmic portion of the chain corresponds to 273 to 274; it reads MQ.

This sequence belongs to the NiCoT transporter (TC 2.A.52) family. RcnA subfamily.

The protein resides in the cell inner membrane. Functionally, efflux system for nickel and cobalt. This Salmonella paratyphi A (strain ATCC 9150 / SARB42) protein is Nickel/cobalt efflux system RcnA (rcnA).